Here is a 561-residue protein sequence, read N- to C-terminus: NO-associated protein 1, chloroplastic/mitochondrial (561 aa).

A chloroplast and mitochondrion-targeting transit peptide spans 1 to 31 (MALRTLSTFPSLPRRHTTTRREPNLTVIYRN). Residues 108–111 (CYGC), 166–174 (YPGGKQFVS), 223–226 (TKID), 260–261 (SK), and 289–294 (NVGKSA) each bind GTP. The CP-type G domain occupies 175-351 (ADELREKLSH…LYDTPGVHLH (177 aa)).

Belongs to the TRAFAC class YlqF/YawG GTPase family. NOA1 subfamily. Expressed in aleurone layer and the embryo.

It localises to the mitochondrion. It is found in the plastid. The protein localises to the chloroplast. It catalyses the reaction 2 L-arginine + 3 NADPH + 4 O2 + H(+) = 2 L-citrulline + 2 nitric oxide + 3 NADP(+) + 4 H2O. Stimulated by calcium/calmodulin. Inhibited by L-NAME. Not activated by tetrahydrobiopterin (BH4), FAD, FMN, or heme. In terms of biological role, exhibits cGTPase activity; binds and hydrolyzes specifically GTP. May participate in ribosome assembly and stability and thus regulates protein synthesis in chloroplasts. The GTPase activity requires MgCl(2)and the presence of either KCl or (NH(4))(2)SO(4). Involved in the post-transcriptional regulation of the methylerythritol phosphate (MEP) pathway. Involved in chlorophyll-a fluorescence regulation. May mediate the production or accumulation of nitric oxide (NO) which is a messenger molecule involved in hormonal signaling and defense responses in plant. Acts as an antisenescence agent. Plays a crucial role in both extracellular calmodulin (ExtCaM)-triggered and salicylic acid (SA)-mediated H(2)O(2)-dependent stomatal closure. This chain is NO-associated protein 1, chloroplastic/mitochondrial (NOA1), found in Arabidopsis thaliana (Mouse-ear cress).